The sequence spans 95 residues: Small ribosomal subunit protein bS6 (95 aa).

It belongs to the bacterial ribosomal protein bS6 family.

Its function is as follows. Binds together with bS18 to 16S ribosomal RNA. This Exiguobacterium sp. (strain ATCC BAA-1283 / AT1b) protein is Small ribosomal subunit protein bS6.